The primary structure comprises 263 residues: Glucosamine-6-phosphate deaminase (263 aa).

Aspartate 72 serves as the catalytic Proton acceptor; for enolization step. Aspartate 141 acts as the For ring-opening step in catalysis. Histidine 143 (proton acceptor; for ring-opening step) is an active-site residue. Glutamate 148 functions as the For ring-opening step in the catalytic mechanism.

This sequence belongs to the glucosamine/galactosamine-6-phosphate isomerase family. NagB subfamily.

It catalyses the reaction alpha-D-glucosamine 6-phosphate + H2O = beta-D-fructose 6-phosphate + NH4(+). It participates in amino-sugar metabolism; N-acetylneuraminate degradation; D-fructose 6-phosphate from N-acetylneuraminate: step 5/5. With respect to regulation, allosterically activated by N-acetylglucosamine 6-phosphate (GlcNAc6P). Functionally, catalyzes the reversible isomerization-deamination of glucosamine 6-phosphate (GlcN6P) to form fructose 6-phosphate (Fru6P) and ammonium ion. The sequence is that of Glucosamine-6-phosphate deaminase from Phocaeicola vulgatus (strain ATCC 8482 / DSM 1447 / JCM 5826 / CCUG 4940 / NBRC 14291 / NCTC 11154) (Bacteroides vulgatus).